Reading from the N-terminus, the 791-residue chain is AP-1 complex subunit gamma-like 2 (791 aa).

Residues alanine 671 to proline 786 form the GAE domain.

It belongs to the adaptor complexes large subunit family. May interact with AP1S1/Sigma1A-adaptin and AP1S2/Sigma1B-adaptin. Probably does not interact with APB1. Interacts (via GAE domain) with RABEP1, NECAP1, CLINT1 and AFTPH/aftiphilin. Interacts with HBV major surface antigen L. Interacts with HBV core protein C in a ubiquitin-dependent manner. Binds ubiquitin. As to expression, widely expressed.

The protein localises to the golgi apparatus membrane. Its subcellular location is the cytoplasmic vesicle membrane. It localises to the endosome membrane. May function in protein sorting in late endosomes or multivesucular bodies (MVBs). Involved in MVB-assisted maturation of hepatitis B virus (HBV). In Mus musculus (Mouse), this protein is AP-1 complex subunit gamma-like 2 (Ap1g2).